Reading from the N-terminus, the 555-residue chain is Dihydroxy-acid dehydratase (555 aa).

Cys46 serves as a coordination point for [2Fe-2S] cluster. A Mg(2+)-binding site is contributed by Asp78. Residue Cys119 participates in [2Fe-2S] cluster binding. The Mg(2+) site is built by Asp120 and Lys121. Position 121 is an N6-carboxylysine (Lys121). Cys191 provides a ligand contact to [2Fe-2S] cluster. Glu442 provides a ligand contact to Mg(2+). Ser468 (proton acceptor) is an active-site residue.

Belongs to the IlvD/Edd family. Homodimer. [2Fe-2S] cluster serves as cofactor. The cofactor is Mg(2+).

The catalysed reaction is (2R)-2,3-dihydroxy-3-methylbutanoate = 3-methyl-2-oxobutanoate + H2O. It carries out the reaction (2R,3R)-2,3-dihydroxy-3-methylpentanoate = (S)-3-methyl-2-oxopentanoate + H2O. Its pathway is amino-acid biosynthesis; L-isoleucine biosynthesis; L-isoleucine from 2-oxobutanoate: step 3/4. It participates in amino-acid biosynthesis; L-valine biosynthesis; L-valine from pyruvate: step 3/4. In terms of biological role, functions in the biosynthesis of branched-chain amino acids. Catalyzes the dehydration of (2R,3R)-2,3-dihydroxy-3-methylpentanoate (2,3-dihydroxy-3-methylvalerate) into 2-oxo-3-methylpentanoate (2-oxo-3-methylvalerate) and of (2R)-2,3-dihydroxy-3-methylbutanoate (2,3-dihydroxyisovalerate) into 2-oxo-3-methylbutanoate (2-oxoisovalerate), the penultimate precursor to L-isoleucine and L-valine, respectively. The polypeptide is Dihydroxy-acid dehydratase (Thermus thermophilus (strain ATCC BAA-163 / DSM 7039 / HB27)).